Reading from the N-terminus, the 676-residue chain is MESSRGPPRVKNKAPAPIQISAEQLLREAVDRQEPALQAPTQRFADLEELHEYQGRKRKEFEDYVRRNRLNMNNWMRYASWELEQKEFRRARSIFERALDVNPTSVVLWIRYIESEMRNRNINHARNLLDRAVTILPRVDKFWYKYVYMEETLGNIQGTRQVFERWMSWEPDEGAWSAYIKLEKRYNEFERARAIFQRFTIVHPEPRNWIKWARFEEEYGTSDLVREVYGMAIETLGEDFMDEKLFIAYAKFEAKLKEYERARAIYKYALDRLPRSKAMALHKAYTTFEKQFGDREGVEDVILSKRRVQYEEQLKENPRNYDVWFDFARLEETSGDPDRVRDIYERAIAQIPPSQEKRHWRRYIYLWIFYAIWEEMEAKDVDRARQIYTECLKLIPHKKFTFAKIWLLKAQFDIRQMDLQAARKTLGQAIGMCPKDKLFRGYIDLERQLFEFVRCRTLYEKQIEWNPANSQSWIKYAELERGLDDSERARAIFELGIDQPMLDMPELVWKAYIDFEEYEGEYDRVRQLYERLLQKTDHVKVWINYARFEINVPEEEEEEEEEEEEERPVSDEAKRRARAVFERAHKVFKEKEMKEERVELLNAWRAFEHTHGSPEDIKKIEEQMPRRVKKRRKLDDDRYEEYMDYVFPADDQAAASLTKILQAAHRWKQTGGQVVP.

HAT repeat units follow at residues 52 to 84, 86 to 118, 120 to 152, 154 to 185, 187 to 218, 220 to 255, 257 to 291, 301 to 333, 335 to 369, 379 to 415, 417 to 448, 450 to 482, 484 to 518, and 520 to 551; these read EYQG…WELE, KEFR…SEMR, RNIN…MEET, GNIQ…LEKR, NEFE…FEEE, GTSD…FEAK, KEYE…FEKQ, VILS…LEET, GDPD…LWIF, KDVD…FDIR, MDLQ…LERQ, FEFV…LERG, DDSE…FEEY, and GEYD…FEIN. Acidic residues predominate over residues 554-566; sequence EEEEEEEEEEEEE. The disordered stretch occupies residues 554 to 573; sequence EEEEEEEEEEEEERPVSDEA. The HAT 15 repeat unit spans residues 572-610; sequence EAKRRARAVFERAHKVFKEKEMKEERVELLNAWRAFEHT.

The protein belongs to the crooked-neck family. Associated with the spliceosome.

The protein localises to the nucleus. Involved in pre-mRNA splicing and cell cycle progression. Required for the spliceosome assembly and initiation of the DNA replication. This chain is Pre-mRNA-splicing factor clf1 (clf1), found in Aspergillus fumigatus (strain ATCC MYA-4609 / CBS 101355 / FGSC A1100 / Af293) (Neosartorya fumigata).